Here is a 430-residue protein sequence, read N- to C-terminus: Histidine--tRNA ligase (430 aa).

It belongs to the class-II aminoacyl-tRNA synthetase family. Homodimer.

Its subcellular location is the cytoplasm. The enzyme catalyses tRNA(His) + L-histidine + ATP = L-histidyl-tRNA(His) + AMP + diphosphate + H(+). This chain is Histidine--tRNA ligase, found in Lactococcus lactis subsp. cremoris (strain MG1363).